A 1186-amino-acid chain; its full sequence is Tricalbin-1 (1186 aa).

Positions 1–50 are disordered; the sequence is MAKEDTGVTAPKKPETAQVANINGIDKLEPPKTKEETESSKSVSSEKAAH. Over 1–106 the chain is Cytoplasmic; the sequence is MAKEDTGVTA…NIIPDSLYGD (106 aa). The segment covering 26–39 has biased composition (basic and acidic residues); the sequence is DKLEPPKTKEETES. The helical transmembrane segment at 107-127 threads the bilayer; sequence WYHSVAIFFIGGVASFALGHY. Position 128 (Lys-128) is a topological domain, extracellular. A helical membrane pass occupies residues 129–149; the sequence is FSMGSAFFVIVITSLLYRTSA. Residues 150–1186 are Cytoplasmic-facing; sequence KKYRGSIREL…HEMGEEETKF (1037 aa). In terms of domain architecture, SMP-LTD spans 172 to 375; sequence DYESLEWLNA…PPFSLQLNIP (204 aa). 3 C2 domains span residues 366–487, 512–636, and 640–757; these read PPFS…RNLK, EKKL…IKIT, and RPVR…DKYE. A coiled-coil region spans residues 795–822; the sequence is LEEIQDLDKVNKKKKALELRKSAIDEKK. One can recognise a C2 4 domain in the interval 976-1094; it reads PIDTKQLPAN…KVEGTTELDV (119 aa). Ser-1000 carries the post-translational modification Phosphoserine. Asp-1008, Asp-1014, Asp-1064, Asp-1066, Ser-1069, and Asp-1072 together coordinate Ca(2+).

This sequence belongs to the tricalbin family. In terms of assembly, interacts with TCB2 via its C-terminal domain. It depends on Ca(2+) as a cofactor.

The protein resides in the cell membrane. It is found in the endoplasmic reticulum membrane. Its function is as follows. May play a role in membrane trafficking. This Saccharomyces cerevisiae (strain ATCC 204508 / S288c) (Baker's yeast) protein is Tricalbin-1 (TCB1).